The chain runs to 113 residues: Histone H2B (113 aa).

Residues 1–21 (MPATPAKRAKRVQQEKRHHKK) form a disordered region. Over residues 7–21 (KRAKRVQQEKRHHKK) the composition is skewed to basic residues. A Glycyl lysine isopeptide (Lys-Gly) (interchain with G-Cter in ubiquitin) cross-link involves residue Lys-109.

It belongs to the histone H2B family. The nucleosome is a histone octamer containing two molecules each of H2A, H2B, H3 and H4 assembled in one H3-H4 heterotetramer and two H2A-H2B heterodimers. The octamer wraps approximately 147 bp of DNA. Monoubiquitination of Lys-109 gives a specific tag for epigenetic transcriptional activation and is also prerequisite for histone H3 'Lys-4' and 'Lys-79' methylation.

The protein localises to the nucleus. The protein resides in the chromosome. In terms of biological role, core component of nucleosome. Nucleosomes wrap and compact DNA into chromatin, limiting DNA accessibility to the cellular machineries which require DNA as a template. Histones thereby play a central role in transcription regulation, DNA repair, DNA replication and chromosomal stability. DNA accessibility is regulated via a complex set of post-translational modifications of histones, also called histone code, and nucleosome remodeling. The chain is Histone H2B (H2B1) from Euplotes crassus.